Here is a 222-residue protein sequence, read N- to C-terminus: MAAHTILASAPSHTTFSLISPFSSTPTNALSSSLQSSSFNGLSFKLSPTTQSLSLSTSAASKPLTIVAATKKAVAVLKGTSNVEGVVTLTQEDDGPTTVNVRISGLAPGKHGFHLHEFGDTTNGCMSTGPHFNPDKKTHGAPEDEVRHAGDLGNIVANTDGVAEATIVDNQIPLTGPNSVVGRALVVHELEDDLGKGGHELSPTTGNAGGRLACGVVGLTPV.

Residues 1-68 (MAAHTILASA…AASKPLTIVA (68 aa)) constitute a chloroplast transit peptide. Histidine 114, histidine 116, and histidine 131 together coordinate Cu cation. Cysteine 125 and cysteine 214 are joined by a disulfide. Positions 131, 139, 148, and 151 each coordinate Zn(2+). Cu cation is bound at residue histidine 188.

Belongs to the Cu-Zn superoxide dismutase family. In terms of assembly, homotetramer. Cu cation is required as a cofactor. It depends on Zn(2+) as a cofactor.

It localises to the plastid. The protein resides in the chloroplast. It carries out the reaction 2 superoxide + 2 H(+) = H2O2 + O2. Destroys radicals which are normally produced within the cells and which are toxic to biological systems. The protein is Superoxide dismutase [Cu-Zn], chloroplastic (SODCP) of Spinacia oleracea (Spinach).